Consider the following 238-residue polypeptide: Large ribosomal subunit protein uL1 (238 aa).

Belongs to the universal ribosomal protein uL1 family. In terms of assembly, part of the 50S ribosomal subunit.

Its function is as follows. Binds directly to 23S rRNA. The L1 stalk is quite mobile in the ribosome, and is involved in E site tRNA release. In terms of biological role, protein L1 is also a translational repressor protein, it controls the translation of the L11 operon by binding to its mRNA. The polypeptide is Large ribosomal subunit protein uL1 (Nostoc sp. (strain PCC 7120 / SAG 25.82 / UTEX 2576)).